A 396-amino-acid polypeptide reads, in one-letter code: Elongation factor Tu (396 aa).

Residues 10-206 (KPHCNIGTIG…AVDAYIPQPE (197 aa)) form the tr-type G domain. The G1 stretch occupies residues 19–26 (GHVDHGKT). Residue 19-26 (GHVDHGKT) coordinates GTP. Thr26 contacts Mg(2+). Positions 60–64 (GITIS) are G2. Positions 81 to 84 (DCPG) are G3. Residues 81-85 (DCPGH) and 136-139 (NKVD) contribute to the GTP site. The tract at residues 136 to 139 (NKVD) is G4. A G5 region spans residues 174–176 (SAL).

This sequence belongs to the TRAFAC class translation factor GTPase superfamily. Classic translation factor GTPase family. EF-Tu/EF-1A subfamily. As to quaternary structure, monomer.

The protein resides in the cytoplasm. The enzyme catalyses GTP + H2O = GDP + phosphate + H(+). In terms of biological role, GTP hydrolase that promotes the GTP-dependent binding of aminoacyl-tRNA to the A-site of ribosomes during protein biosynthesis. The polypeptide is Elongation factor Tu (Gluconacetobacter diazotrophicus (strain ATCC 49037 / DSM 5601 / CCUG 37298 / CIP 103539 / LMG 7603 / PAl5)).